The following is a 1072-amino-acid chain: Error-prone DNA polymerase (1072 aa).

Belongs to the DNA polymerase type-C family. DnaE2 subfamily.

It localises to the cytoplasm. The enzyme catalyses DNA(n) + a 2'-deoxyribonucleoside 5'-triphosphate = DNA(n+1) + diphosphate. In terms of biological role, DNA polymerase involved in damage-induced mutagenesis and translesion synthesis (TLS). It is not the major replicative DNA polymerase. In Burkholderia pseudomallei (strain K96243), this protein is Error-prone DNA polymerase.